The sequence spans 600 residues: Glutamine--fructose-6-phosphate aminotransferase [isomerizing] (600 aa).

The Nucleophile; for GATase activity role is filled by Cys2. The region spanning 2-217 (CGIVGFIGEQ…DKEIVIVMKE (216 aa)) is the Glutamine amidotransferase type-2 domain. SIS domains are found at residues 283–422 (IRNA…AKGE) and 452–590 (LAKQ…VDKP). Catalysis depends on Lys595, which acts as the For Fru-6P isomerization activity.

In terms of assembly, homodimer.

The protein resides in the cytoplasm. It carries out the reaction D-fructose 6-phosphate + L-glutamine = D-glucosamine 6-phosphate + L-glutamate. Catalyzes the first step in hexosamine metabolism, converting fructose-6P into glucosamine-6P using glutamine as a nitrogen source. The polypeptide is Glutamine--fructose-6-phosphate aminotransferase [isomerizing] (Bacillus anthracis).